The primary structure comprises 262 residues: NAD-dependent protein deacylase (262 aa).

One can recognise a Deacetylase sirtuin-type domain in the interval 1-262 (MSNLRRAAEA…AALSPPGVPT (262 aa)). 22 to 42 (GAGISADSGIPTFRDKLTGLW) serves as a coordination point for NAD(+). Substrate contacts are provided by Y67 and R70. An NAD(+)-binding site is contributed by 101-104 (QNID). H119 (proton acceptor) is an active-site residue. Zn(2+) is bound by residues C127, C130, C155, and C158. Residues 195–197 (GTS), 221–223 (NLE), and A239 each bind NAD(+).

It belongs to the sirtuin family. Class III subfamily. Zn(2+) is required as a cofactor.

It is found in the cytoplasm. It carries out the reaction N(6)-acetyl-L-lysyl-[protein] + NAD(+) + H2O = 2''-O-acetyl-ADP-D-ribose + nicotinamide + L-lysyl-[protein]. The catalysed reaction is N(6)-succinyl-L-lysyl-[protein] + NAD(+) + H2O = 2''-O-succinyl-ADP-D-ribose + nicotinamide + L-lysyl-[protein]. NAD-dependent lysine deacetylase and desuccinylase that specifically removes acetyl and succinyl groups on target proteins. Modulates the activities of several proteins which are inactive in their acylated form. The sequence is that of NAD-dependent protein deacylase from Pseudomonas putida (strain ATCC 47054 / DSM 6125 / CFBP 8728 / NCIMB 11950 / KT2440).